Here is a 283-residue protein sequence, read N- to C-terminus: Phosphatidylglycerol--prolipoprotein diacylglyceryl transferase (283 aa).

3 helical membrane-spanning segments follow: residues 17–37 (LAVR…TFLG), 56–76 (FLTW…VLFY), and 92–112 (WEGG…IWLF). Residue Arg139 participates in a 1,2-diacyl-sn-glycero-3-phospho-(1'-sn-glycerol) binding. 2 consecutive transmembrane segments (helical) span residues 222–242 (GQTA…AEFA) and 255–275 (GLSM…VGFV).

The protein belongs to the Lgt family.

The protein resides in the cell inner membrane. It carries out the reaction L-cysteinyl-[prolipoprotein] + a 1,2-diacyl-sn-glycero-3-phospho-(1'-sn-glycerol) = an S-1,2-diacyl-sn-glyceryl-L-cysteinyl-[prolipoprotein] + sn-glycerol 1-phosphate + H(+). The protein operates within protein modification; lipoprotein biosynthesis (diacylglyceryl transfer). Its function is as follows. Catalyzes the transfer of the diacylglyceryl group from phosphatidylglycerol to the sulfhydryl group of the N-terminal cysteine of a prolipoprotein, the first step in the formation of mature lipoproteins. This chain is Phosphatidylglycerol--prolipoprotein diacylglyceryl transferase, found in Neisseria gonorrhoeae (strain ATCC 700825 / FA 1090).